The sequence spans 219 residues: Large ribosomal subunit protein bL25 (219 aa).

Positions 188–219 are disordered; that stretch reads TVAAPADTAVQPESSSTKGKKDEDGALAKDKK. A compositionally biased stretch (basic and acidic residues) spans 206-219; the sequence is GKKDEDGALAKDKK.

The protein belongs to the bacterial ribosomal protein bL25 family. CTC subfamily. In terms of assembly, part of the 50S ribosomal subunit; part of the 5S rRNA/L5/L18/L25 subcomplex. Contacts the 5S rRNA. Binds to the 5S rRNA independently of L5 and L18.

In terms of biological role, this is one of the proteins that binds to the 5S RNA in the ribosome where it forms part of the central protuberance. This is Large ribosomal subunit protein bL25 from Elusimicrobium minutum (strain Pei191).